We begin with the raw amino-acid sequence, 668 residues long: Fructose-1,6-bisphosphatase class 3 (668 aa).

This sequence belongs to the FBPase class 3 family. Mn(2+) serves as cofactor.

It catalyses the reaction beta-D-fructose 1,6-bisphosphate + H2O = beta-D-fructose 6-phosphate + phosphate. It functions in the pathway carbohydrate biosynthesis; gluconeogenesis. This Clostridium botulinum (strain 657 / Type Ba4) protein is Fructose-1,6-bisphosphatase class 3.